A 235-amino-acid chain; its full sequence is MVDTSNLLPQTPRLLKVPLIILNIILWILGLVLVIVGGICVSFLSNFKDFTKASDAKSALSNLTTSIPAGVLVIGILFVIFTVVGCFVAYKEKLVGLVIYCAVMLILLVILIGVGGKAITLHNDDIINEVGGAWEHVANGTKNSTLTRLENFLKCCKWSNVSIDSSDLCPKDGDKIKYEGHYCGEALSDQFSSKIYAVGAAGLAIGIIELVAILFSLFLIIRICRSPRTRSYDQY.

The Cytoplasmic segment spans residues 1-18 (MVDTSNLLPQTPRLLKVP). Residues 19 to 39 (LIILNIILWILGLVLVIVGGI) form a helical membrane-spanning segment. At 40–68 (CVSFLSNFKDFTKASDAKSALSNLTTSIP) the chain is on the extracellular side. An N-linked (GlcNAc...) asparagine glycan is attached at asparagine 62. The chain crosses the membrane as a helical span at residues 69 to 89 (AGVLVIGILFVIFTVVGCFVA). The Cytoplasmic portion of the chain corresponds to 90-93 (YKEK). Residues 94–114 (LVGLVIYCAVMLILLVILIGV) form a helical membrane-spanning segment. The Extracellular portion of the chain corresponds to 115–200 (GGKAITLHND…FSSKIYAVGA (86 aa)). N-linked (GlcNAc...) asparagine glycans are attached at residues asparagine 139, asparagine 143, and asparagine 160. The chain crosses the membrane as a helical span at residues 201–221 (AGLAIGIIELVAILFSLFLII). Over 222 to 235 (RICRSPRTRSYDQY) the chain is Cytoplasmic.

It belongs to the tetraspanin (TM4SF) family.

It is found in the membrane. The chain is Probable tetraspanin tspA (tspA) from Dictyostelium discoideum (Social amoeba).